The sequence spans 68 residues: UPF0434 protein BURPS668_0926 (68 aa).

It belongs to the UPF0434 family.

This chain is UPF0434 protein BURPS668_0926, found in Burkholderia pseudomallei (strain 668).